The following is a 362-amino-acid chain: Cobalt-precorrin-5B C(1)-methyltransferase (362 aa).

This sequence belongs to the CbiD family.

The catalysed reaction is Co-precorrin-5B + S-adenosyl-L-methionine = Co-precorrin-6A + S-adenosyl-L-homocysteine. It participates in cofactor biosynthesis; adenosylcobalamin biosynthesis; cob(II)yrinate a,c-diamide from sirohydrochlorin (anaerobic route): step 6/10. Functionally, catalyzes the methylation of C-1 in cobalt-precorrin-5B to form cobalt-precorrin-6A. The protein is Cobalt-precorrin-5B C(1)-methyltransferase of Burkholderia cenocepacia (strain ATCC BAA-245 / DSM 16553 / LMG 16656 / NCTC 13227 / J2315 / CF5610) (Burkholderia cepacia (strain J2315)).